The following is an 87-amino-acid chain: Cytochrome c oxidase subunit 6B1 (87 aa).

One can recognise a CHCH domain in the interval 28 to 74 (TRNCWQNYLDFHRCQKAMTTKGGNVSVCEWYQRVYQSLCPTSWVTDW). A Cx9C motif motif is present at residues 31-41 (CWQNYLDFHRC). 2 cysteine pairs are disulfide-bonded: Cys31-Cys66 and Cys41-Cys55. A Cx10C motif motif is present at residues 55-66 (CEWYQRVYQSLC).

Its subcellular location is the mitochondrion intermembrane space. Functionally, connects the two COX monomers into the physiological dimeric form. The sequence is that of Cytochrome c oxidase subunit 6B1 (COX6B1) from Macaca fascicularis (Crab-eating macaque).